Reading from the N-terminus, the 381-residue chain is Chaperone protein DnaJ (381 aa).

One can recognise a J domain in the interval 5 to 70; it reads DFYEVLGVGR…QKKAAYDQYG (66 aa). Residues 136 to 214 form a CR-type zinc finger; that stretch reads GCSKEIEVPT…CHGQGRKQKT (79 aa). Zn(2+) is bound by residues cysteine 149, cysteine 152, cysteine 166, cysteine 169, cysteine 188, cysteine 191, cysteine 202, and cysteine 205. CXXCXGXG motif repeat units follow at residues 149 to 156, 166 to 173, 188 to 195, and 202 to 209; these read CDACDGSG, CGTCHGHG, CPTCHGKG, and CNVCHGQG.

It belongs to the DnaJ family. In terms of assembly, homodimer. Requires Zn(2+) as cofactor.

Its subcellular location is the cytoplasm. In terms of biological role, participates actively in the response to hyperosmotic and heat shock by preventing the aggregation of stress-denatured proteins and by disaggregating proteins, also in an autonomous, DnaK-independent fashion. Unfolded proteins bind initially to DnaJ; upon interaction with the DnaJ-bound protein, DnaK hydrolyzes its bound ATP, resulting in the formation of a stable complex. GrpE releases ADP from DnaK; ATP binding to DnaK triggers the release of the substrate protein, thus completing the reaction cycle. Several rounds of ATP-dependent interactions between DnaJ, DnaK and GrpE are required for fully efficient folding. Also involved, together with DnaK and GrpE, in the DNA replication of plasmids through activation of initiation proteins. The polypeptide is Chaperone protein DnaJ (Vibrio cholerae serotype O1 (strain ATCC 39541 / Classical Ogawa 395 / O395)).